The following is a 209-amino-acid chain: C-type lectin domain family 6 member A (209 aa).

Topologically, residues 1–20 (MVQERQSQGKGVCWTLRLWS) are cytoplasmic. Residues 21 to 43 (AAVISMLLLSTCFIASCVVTYQF) form a helical; Signal-anchor for type II membrane protein membrane-spanning segment. The Extracellular portion of the chain corresponds to 44–209 (IMDQPSRRLY…SICEMKKIYL (166 aa)). Disulfide bonds link cysteine 64-cysteine 78, cysteine 79-cysteine 90, cysteine 107-cysteine 202, and cysteine 176-cysteine 194. Positions 86 to 203 (FGSSCYLIST…CDSKHNSICE (118 aa)) constitute a C-type lectin domain. The Ca(2+) site is built by valine 116, asparagine 118, and glutamate 122. N-linked (GlcNAc...) asparagine glycosylation occurs at asparagine 131. Positions 168, 170, and 174 each coordinate Ca(2+). Alpha-D-mannopyranose is bound by residues 168–170 (EPN), glutamate 174, tryptophan 182, and 190–191 (ND). The Ca(2+) site is built by asparagine 190, aspartate 191, and glutamate 203.

Associated with FCER1G. Heterodimer with CLEC4D; this heterodimer forms a pattern recognition receptor (PRR) against fungal infection. In terms of tissue distribution, expressed by the XS52 DC (dendritic cell) line (at protein level). Expressed constitutively by the epidermis, and skin resident DC appear to be the major source of this expression. Expressed in the spleen and thymus. Expression was undetectable in non-DC lines, including macrophage lines (J774 and Raw), T-cell lines (7-17, HDK-1, and D10), B-cell hybridoma (5C5), a keratinocyte line (Pam 212), and a fibroblast line (NS01).

Its subcellular location is the cell membrane. Calcium-dependent lectin that acts as a pattern recognition receptor (PRR) of the innate immune system: specifically recognizes and binds alpha-mannans on C.albicans hypheas. Binding of C.albicans alpha-mannans to this receptor complex leads to phosphorylation of the immunoreceptor tyrosine-based activation motif (ITAM) of FCER1G, triggering activation of SYK, CARD9 and NF-kappa-B, consequently driving maturation of antigen-presenting cells and shaping antigen-specific priming of T-cells toward effector T-helper 1 and T-helper 17 cell subtypes. Also recognizes, in a mannose-dependent manner, allergens from house dust mite and fungi, by promoting cysteinyl leukotriene production. Recognizes soluble elements from the eggs of Shistosoma mansoni altering adaptive immune responses. This is C-type lectin domain family 6 member A from Mus musculus (Mouse).